The following is a 459-amino-acid chain: Argininosuccinate lyase (459 aa).

This sequence belongs to the lyase 1 family. Argininosuccinate lyase subfamily.

It localises to the cytoplasm. It carries out the reaction 2-(N(omega)-L-arginino)succinate = fumarate + L-arginine. It functions in the pathway amino-acid biosynthesis; L-arginine biosynthesis; L-arginine from L-ornithine and carbamoyl phosphate: step 3/3. This Prochlorococcus marinus (strain AS9601) protein is Argininosuccinate lyase.